Here is a 213-residue protein sequence, read N- to C-terminus: High frequency lysogenization protein HflD homolog (213 aa).

The stretch at 79 to 126 forms a coiled coil; that stretch reads QGLNAELTRYTLSLMVLERKLSSAKGALDTLGNRINGLQRQLEHFDLQ.

Belongs to the HflD family.

Its subcellular location is the cytoplasm. It is found in the cell inner membrane. This Shigella dysenteriae serotype 1 (strain Sd197) protein is High frequency lysogenization protein HflD homolog.